The primary structure comprises 313 residues: Putative S-adenosyl-L-methionine-dependent methyltransferase MAP_3563 (313 aa).

S-adenosyl-L-methionine is bound by residues Asp-139 and 168–169 (DL).

This sequence belongs to the UPF0677 family.

Functionally, exhibits S-adenosyl-L-methionine-dependent methyltransferase activity. The polypeptide is Putative S-adenosyl-L-methionine-dependent methyltransferase MAP_3563 (Mycolicibacterium paratuberculosis (strain ATCC BAA-968 / K-10) (Mycobacterium paratuberculosis)).